We begin with the raw amino-acid sequence, 129 residues long: Azurin-2 (129 aa).

Residues 1–129 enclose the Plastocyanin-like domain; it reads AQCEATVESN…MMKGTLKLGS (129 aa). A disulfide bridge links Cys3 with Cys26. The Cu cation site is built by His46, Cys112, His117, and Met121.

Its subcellular location is the periplasm. Its function is as follows. Transfers electrons from cytochrome c551 to cytochrome oxidase. The polypeptide is Azurin-2 (Alcaligenes xylosoxydans xylosoxydans (Achromobacter xylosoxidans)).